A 624-amino-acid chain; its full sequence is DNA mismatch repair protein MutL (624 aa).

It belongs to the DNA mismatch repair MutL/HexB family.

Functionally, this protein is involved in the repair of mismatches in DNA. It is required for dam-dependent methyl-directed DNA mismatch repair. May act as a 'molecular matchmaker', a protein that promotes the formation of a stable complex between two or more DNA-binding proteins in an ATP-dependent manner without itself being part of a final effector complex. The polypeptide is DNA mismatch repair protein MutL (Chlorobium phaeobacteroides (strain DSM 266 / SMG 266 / 2430)).